Consider the following 166-residue polypeptide: Protein adg1 (166 aa).

The N-terminal stretch at 1-22 (MFLRSIFQTLCAVSFLAGSVFA) is a signal peptide.

Its subcellular location is the endoplasmic reticulum. This is Protein adg1 (adg1) from Schizosaccharomyces pombe (strain 972 / ATCC 24843) (Fission yeast).